Here is a 317-residue protein sequence, read N- to C-terminus: Sulfate adenylyltransferase subunit 2 (317 aa).

Disordered regions lie at residues 1 to 21 (MPDS…APLD) and 298 to 317 (RAID…EGYF).

The protein belongs to the PAPS reductase family. CysD subfamily. In terms of assembly, heterodimer composed of CysD, the smaller subunit, and CysN.

The enzyme catalyses sulfate + ATP + H(+) = adenosine 5'-phosphosulfate + diphosphate. The protein operates within sulfur metabolism; hydrogen sulfide biosynthesis; sulfite from sulfate: step 1/3. With CysN forms the ATP sulfurylase (ATPS) that catalyzes the adenylation of sulfate producing adenosine 5'-phosphosulfate (APS) and diphosphate, the first enzymatic step in sulfur assimilation pathway. APS synthesis involves the formation of a high-energy phosphoric-sulfuric acid anhydride bond driven by GTP hydrolysis by CysN coupled to ATP hydrolysis by CysD. This chain is Sulfate adenylyltransferase subunit 2, found in Rhizobium etli (strain ATCC 51251 / DSM 11541 / JCM 21823 / NBRC 15573 / CFN 42).